A 357-amino-acid chain; its full sequence is Peptide chain release factor 1 (357 aa).

N5-methylglutamine is present on Gln-234. A disordered region spans residues 282 to 313; sequence DSKKQEQRSNNRKQQVGSGDRSERIRTYNFPQ.

Belongs to the prokaryotic/mitochondrial release factor family. Methylated by PrmC. Methylation increases the termination efficiency of RF1.

Its subcellular location is the cytoplasm. Peptide chain release factor 1 directs the termination of translation in response to the peptide chain termination codons UAG and UAA. The protein is Peptide chain release factor 1 of Borreliella afzelii (strain PKo) (Borrelia afzelii).